The chain runs to 360 residues: Viral protein TPX (360 aa).

The tract at residues 269 to 289 (TVTPISSPSPTPTPTPTPTPT) is disordered. One copy of the Thr-Pro(N) repeat lies at 270 to 291 (VTPISSPSPTPTPTPTPTPTPT). Residues 275–289 (SPSPTPTPTPTPTPT) show a composition bias toward pro residues. The 3 Thr-Pro repeats regions and two near identical repeats stretch occupies residues 278-353 (PTPTPTPTPT…PTPTPTPTPT (76 aa)). A repeat spans 292 to 301 (YDITYVVFDV). One copy of the Thr-Pro(N) repeat lies at 302 to 322 (TPSPTPTPTLTSTPTPTPTPT). The stretch at residues 323–332 (YDITYVIFDV) is a repeat. The segment at 332–360 (VTPSPTPTPTPTPTPTPTPTPTSTTSSNI) is disordered. Residues 333 to 353 (TPSPTPTPTPTPTPTPTPTPT) form a Thr-Pro(N) repeat. Residues 335–351 (SPTPTPTPTPTPTPTPT) show a composition bias toward pro residues.

This Thermoproteus tenax (TTV1) protein is Viral protein TPX.